The chain runs to 292 residues: Ribosomal RNA small subunit methyltransferase A (292 aa).

The S-adenosyl-L-methionine site is built by asparagine 28, leucine 30, glycine 55, glutamate 77, aspartate 103, and asparagine 123.

It belongs to the class I-like SAM-binding methyltransferase superfamily. rRNA adenine N(6)-methyltransferase family. RsmA subfamily.

Its subcellular location is the cytoplasm. The enzyme catalyses adenosine(1518)/adenosine(1519) in 16S rRNA + 4 S-adenosyl-L-methionine = N(6)-dimethyladenosine(1518)/N(6)-dimethyladenosine(1519) in 16S rRNA + 4 S-adenosyl-L-homocysteine + 4 H(+). Functionally, specifically dimethylates two adjacent adenosines (A1518 and A1519) in the loop of a conserved hairpin near the 3'-end of 16S rRNA in the 30S particle. May play a critical role in biogenesis of 30S subunits. This chain is Ribosomal RNA small subunit methyltransferase A, found in Methylobacterium radiotolerans (strain ATCC 27329 / DSM 1819 / JCM 2831 / NBRC 15690 / NCIMB 10815 / 0-1).